Reading from the N-terminus, the 382-residue chain is D-galactonate dehydratase 1 (382 aa).

Aspartate 183 serves as a coordination point for Mg(2+). The active-site Proton donor is histidine 185. Positions 209 and 235 each coordinate Mg(2+). Histidine 285 acts as the Proton acceptor in catalysis.

This sequence belongs to the mandelate racemase/muconate lactonizing enzyme family. GalD subfamily. Mg(2+) is required as a cofactor.

It carries out the reaction D-galactonate = 2-dehydro-3-deoxy-D-galactonate + H2O. The protein operates within carbohydrate acid metabolism; D-galactonate degradation; D-glyceraldehyde 3-phosphate and pyruvate from D-galactonate: step 1/3. Functionally, catalyzes the dehydration of D-galactonate to 2-keto-3-deoxy-D-galactonate. In Escherichia coli (strain SMS-3-5 / SECEC), this protein is D-galactonate dehydratase 1.